The primary structure comprises 356 residues: Phospho-N-acetylmuramoyl-pentapeptide-transferase (356 aa).

10 helical membrane-spanning segments follow: residues 3–23 (QILF…PLLI), 51–71 (TMGG…AKVI), 80–100 (GLLV…DDYI), 114–134 (AKMA…LQFP), 152–172 (FGWS…ILAM), 185–205 (LATG…LWQF), 227–247 (PLDL…FLWW), 254–274 (IFMG…LAIL), 279–299 (FLLA…VIQV), and 333–353 (FWII…AGWA).

Belongs to the glycosyltransferase 4 family. MraY subfamily. Mg(2+) is required as a cofactor.

Its subcellular location is the cell membrane. It carries out the reaction UDP-N-acetyl-alpha-D-muramoyl-L-alanyl-gamma-D-glutamyl-meso-2,6-diaminopimeloyl-D-alanyl-D-alanine + di-trans,octa-cis-undecaprenyl phosphate = di-trans,octa-cis-undecaprenyl diphospho-N-acetyl-alpha-D-muramoyl-L-alanyl-D-glutamyl-meso-2,6-diaminopimeloyl-D-alanyl-D-alanine + UMP. It functions in the pathway cell wall biogenesis; peptidoglycan biosynthesis. Catalyzes the initial step of the lipid cycle reactions in the biosynthesis of the cell wall peptidoglycan: transfers peptidoglycan precursor phospho-MurNAc-pentapeptide from UDP-MurNAc-pentapeptide onto the lipid carrier undecaprenyl phosphate, yielding undecaprenyl-pyrophosphoryl-MurNAc-pentapeptide, known as lipid I. The protein is Phospho-N-acetylmuramoyl-pentapeptide-transferase of Streptomyces griseus subsp. griseus (strain JCM 4626 / CBS 651.72 / NBRC 13350 / KCC S-0626 / ISP 5235).